A 410-amino-acid polypeptide reads, in one-letter code: Phosphoglycerate kinase (410 aa).

Substrate-binding positions include 19–21 (DLN), R34, 57–60 (HQGK), R114, and R154. ATP contacts are provided by residues E332 and 358–361 (GGHS).

This sequence belongs to the phosphoglycerate kinase family. Homodimer.

Its subcellular location is the cytoplasm. It carries out the reaction (2R)-3-phosphoglycerate + ATP = (2R)-3-phospho-glyceroyl phosphate + ADP. Its pathway is carbohydrate degradation; glycolysis; pyruvate from D-glyceraldehyde 3-phosphate: step 2/5. The chain is Phosphoglycerate kinase (pgk) from Pyrococcus abyssi (strain GE5 / Orsay).